The chain runs to 469 residues: 3-isopropylmalate dehydratase large subunit (469 aa).

Cys-347, Cys-410, and Cys-413 together coordinate [4Fe-4S] cluster.

Belongs to the aconitase/IPM isomerase family. LeuC type 1 subfamily. In terms of assembly, heterodimer of LeuC and LeuD. [4Fe-4S] cluster serves as cofactor.

It catalyses the reaction (2R,3S)-3-isopropylmalate = (2S)-2-isopropylmalate. The protein operates within amino-acid biosynthesis; L-leucine biosynthesis; L-leucine from 3-methyl-2-oxobutanoate: step 2/4. Its function is as follows. Catalyzes the isomerization between 2-isopropylmalate and 3-isopropylmalate, via the formation of 2-isopropylmaleate. This Polynucleobacter necessarius subsp. necessarius (strain STIR1) protein is 3-isopropylmalate dehydratase large subunit.